The primary structure comprises 404 residues: Synaptic vesicle membrane protein VAT-1 homolog (404 aa).

The disordered stretch occupies residues 1–55 (MSAEREATEAATVAAAAEARAETGAGEGAPSQPPTVEVASDPQPPPAPEASASAS). S2 carries the N-acetylserine modification. S2 is subject to Phosphoserine. A compositionally biased stretch (low complexity) spans 9–24 (EAATVAAAAEARAETG). S31 and S40 each carry phosphoserine.

It belongs to the zinc-containing alcohol dehydrogenase family. Quinone oxidoreductase subfamily. In terms of assembly, interacts with MFN1 and MFN2. Ubiquitously expressed.

It localises to the cytoplasm. Its subcellular location is the mitochondrion outer membrane. Functionally, plays a part in calcium-regulated keratinocyte activation in epidermal repair mechanisms. Has no effect on cell proliferation. Possesses ATPase activity. May negatively regulate mitochondrial fusion. This Rattus norvegicus (Rat) protein is Synaptic vesicle membrane protein VAT-1 homolog (Vat1).